Consider the following 140-residue polypeptide: Acyl-coenzyme A thioesterase 13 (140 aa).

Residue methionine 1 is modified to N-acetylmethionine. At threonine 2 the chain carries N-acetylthreonine; in Acyl-coenzyme A thioesterase 13, N-terminally processed. N6-acetyllysine occurs at positions 27, 37, and 43. Glutamate 46 is a CoA binding site. 2 residues coordinate substrate: asparagine 50 and glycine 81. Residues serine 83, 90-95, and 108-113 contribute to the CoA site; these read YMSPAK and KQGKTL. Residues lysine 108 and lysine 127 each carry the N6-acetyllysine modification. Histidine 137 provides a ligand contact to CoA.

Belongs to the thioesterase PaaI family. As to quaternary structure, homotetramer. Interacts with PCTP.

It is found in the cytoplasm. It localises to the cytosol. Its subcellular location is the mitochondrion. The protein resides in the nucleus. The protein localises to the cytoskeleton. It is found in the spindle. It carries out the reaction a fatty acyl-CoA + H2O = a fatty acid + CoA + H(+). The catalysed reaction is decanoyl-CoA + H2O = decanoate + CoA + H(+). It catalyses the reaction octanoyl-CoA + H2O = octanoate + CoA + H(+). The enzyme catalyses butanoyl-CoA + H2O = butanoate + CoA + H(+). It carries out the reaction hexanoyl-CoA + H2O = hexanoate + CoA + H(+). The catalysed reaction is tetradecanoyl-CoA + H2O = tetradecanoate + CoA + H(+). It catalyses the reaction hexadecanoyl-CoA + H2O = hexadecanoate + CoA + H(+). The enzyme catalyses dodecanoyl-CoA + H2O = dodecanoate + CoA + H(+). It carries out the reaction (9Z)-octadecenoyl-CoA + H2O = (9Z)-octadecenoate + CoA + H(+). The catalysed reaction is (5Z,8Z,11Z,14Z)-eicosatetraenoyl-CoA + H2O = (5Z,8Z,11Z,14Z)-eicosatetraenoate + CoA + H(+). Catalyzes the hydrolysis of acyl-CoAs into free fatty acids and coenzyme A (CoASH), regulating their respective intracellular levels. Has acyl-CoA thioesterase activity towards medium (C12) and long-chain (C18) fatty acyl-CoA substrates. Can also hydrolyze 3-hydroxyphenylacetyl-CoA and 3,4-dihydroxyphenylacetyl-CoA (in vitro). May play a role in controlling adaptive thermogenesis. In Homo sapiens (Human), this protein is Acyl-coenzyme A thioesterase 13.